Reading from the N-terminus, the 148-residue chain is Ribonuclease pancreatic (148 aa).

Positions 1-25 (MGLEKSLILLPLLVLVFGWVQPSLG) are cleaved as a signal peptide. Substrate is bound by residues K32 and R35. The active-site Proton acceptor is the H37. Disulfide bonds link C50-C108, C64-C119, C82-C134, and C89-C96. N58 carries N-linked (GlcNAc...) asparagine glycosylation. 65–69 (KPVNT) serves as a coordination point for substrate. N-linked (GlcNAc...) asparagine glycosylation is present at N86. Substrate is bound by residues K90 and R109. The Proton donor role is filled by H143.

It belongs to the pancreatic ribonuclease family. In terms of assembly, monomer. Interacts with and forms tight 1:1 complexes with RNH1. Dimerization of two such complexes may occur. Interaction with RNH1 inhibits this protein. Pancreas.

It is found in the secreted. It catalyses the reaction an [RNA] containing cytidine + H2O = an [RNA]-3'-cytidine-3'-phosphate + a 5'-hydroxy-ribonucleotide-3'-[RNA].. The enzyme catalyses an [RNA] containing uridine + H2O = an [RNA]-3'-uridine-3'-phosphate + a 5'-hydroxy-ribonucleotide-3'-[RNA].. Functionally, endonuclease that catalyzes the cleavage of RNA on the 3' side of pyrimidine nucleotides. Acts on single-stranded and double-stranded RNA. In Myodes glareolus (Bank vole), this protein is Ribonuclease pancreatic (RNASE1).